A 549-amino-acid polypeptide reads, in one-letter code: MDVVEVAGSWWAQEREDIIMKYEKGHRAGLPEDKGPKPFRSYNNNVDHLGIVHETELPPLTAREAKQIRREISRKSKWVDMLGDWEKYKSSRKLIDRAYKGMPMNIRGPMWSVLLNIEEMKLKNPGRYQIMKEKGKRSSEHIQRIDRDISGTLRKHMFFRDRYGTKQRELLHILLAYEEYNPEVGYCRDLSHIAALFLLYLPEEDAFWALVQLLASERHSLQGFHSPNGGTVQGLQDQQEHVVATSQSKTMGHQDKKDLCGQCSPLGCLIRILIDGISLGLTLRLWDVYLVEGEQALMPITRIAFKVQQKRLTKTSRCGPWARFCNRFVDTWARDEDTVLKHLRASMKKLTRKQGDLPPPAKPEQGSSASRPVPASRGRKTLCKGDRQAPPGPPARFPRPIWSASPPRAPRSSTPCPGGAVREDTYPVGTQGVPSPALAQGGPQGSWRFLQWNSMPRLPTDLDVEGPWFRHYDFRQSCWVRAISQEDQLAPCWQAEHPAERVRSAFAAPSTDSDQGTPFRARDEQQCAPTSGPCLCGLHLESSQFPPGF.

Residues 101–293 (GMPMNIRGPM…RLWDVYLVEG (193 aa)) enclose the Rab-GAP TBC domain. S-palmitoyl cysteine attachment occurs at residues cysteine 318 and cysteine 325. Positions 350–426 (LTRKQGDLPP…PGGAVREDTY (77 aa)) are disordered. The segment covering 398-417 (PRPIWSASPPRAPRSSTPCP) has biased composition (low complexity).

In terms of processing, ubiquitinated by a CUL7-based E3 ligase, which leads to proteasomal degradation. Post-translationally, palmitoylation is required for membrane localization and protects TBC1D3 from ubiquitination.

It localises to the cell membrane. Functionally, acts as a GTPase activating protein for RAB5. Does not act on RAB4 or RAB11. The sequence is that of TBC1 domain family member 3B (TBC1D3B) from Homo sapiens (Human).